A 752-amino-acid polypeptide reads, in one-letter code: Microtubule-associated protein tau (752 aa).

Residues 1–567 form a disordered region; that stretch reads MAEPRQEFDT…PVPMPDLKNV (567 aa). Alanine 2 is subject to N-acetylalanine. Tyrosine 18 bears the Phosphotyrosine mark. Residue lysine 33 forms a Glycyl lysine isopeptide (Lys-Gly) (interchain with G-Cter in ubiquitin) linkage. 2 positions are modified to phosphoserine: serine 35 and serine 50. A compositionally biased stretch (polar residues) spans 50–60; sequence SETSDAKSTPT. 3 positions are modified to phosphothreonine: threonine 58, threonine 60, and threonine 100. Over residues 142 to 151 the composition is skewed to polar residues; it reads SDWTHQQVPS. Residues 173 to 182 are compositionally biased toward basic and acidic residues; that stretch reads RPEDVERSHP. 2 positions are modified to phosphoserine: serine 191 and serine 204. Residues 192-204 are compositionally biased toward basic and acidic residues; that stretch reads PQKEAWGKDRLGS. The segment covering 205–218 has biased composition (acidic residues); the sequence is EEEVDEDITMDESS. The span at 219-229 shows a compositional bias: low complexity; that stretch reads QESPPSQASLA. Over residues 233-252 the composition is skewed to polar residues; it reads ATPQARSVSASGVSGETTSI. 2 stretches are compositionally biased toward basic and acidic residues: residues 289–313 and 374–385; these read EEGH…KEQD and SKDRTGNDEKKA. Composition is skewed to polar residues over residues 387–400 and 432–446; these read TSTP…SNRP and KYVS…SPGT. The residue at position 464 (threonine 464) is a Phosphothreonine. Arginine 466 carries the post-translational modification Omega-N-methylarginine. N6,N6-dimethyllysine; alternate is present on lysine 474. Lysine 474 carries the post-translational modification N6-acetyllysine; alternate. Phosphothreonine is present on residues threonine 480, threonine 486, and threonine 487. Serine 489 bears the Phosphoserine mark. Threonine 492 carries the phosphothreonine modification. Phosphoserine is present on residues serine 496, serine 502, and serine 506. Positions 498 to 525 are enriched in low complexity; sequence EPPKSGERSGYSSPGSPGTPGSRSRTPS. Tyrosine 508 is modified (phosphotyrosine). 2 positions are modified to phosphoserine: serine 509 and serine 510. Serine 513 carries the post-translational modification Phosphoserine; by CK1, PDPK1 and TTBK1. Residues threonine 516 and threonine 523 each carry the phosphothreonine modification. Serine 525 carries the phosphoserine modification. Threonine 528 is modified (phosphothreonine). Position 536 is an N6-acetyllysine (lysine 536). Position 542 is a phosphothreonine (threonine 542). A phosphoserine mark is found at serine 546 and serine 548. Tau/MAP repeat units lie at residues 555-585, 586-616, 617-647, and 648-679; these read QTAP…GGGK, VQII…GGGS, VHIV…GGGQ, and VEVK…GGGN. A Glycyl lysine isopeptide (Lys-Gly) (interchain with G-Cter in ubiquitin) cross-link involves residue lysine 565. Lysine 570 bears the N6-acetyllysine; alternate mark. Lysine 570 is subject to N6-methyllysine; alternate. Lysine 570 is covalently cross-linked (Glycyl lysine isopeptide (Lys-Gly) (interchain with G-Cter in ubiquitin); alternate). Serine 573 is subject to Phosphoserine. Lysine 578 participates in a covalent cross-link: Glycyl lysine isopeptide (Lys-Gly) (interchain with G-Cter in ubiquitin). Lysine 592 carries the N6-acetyllysine; alternate modification. A Glycyl lysine isopeptide (Lys-Gly) (interchain with G-Cter in ubiquitin); alternate cross-link involves residue lysine 592. Phosphoserine occurs at positions 596 and 600. The residue at position 601 (lysine 601) is an N6-acetyllysine. The cysteines at positions 602 and 633 are disulfide-linked. The residue at position 604 (serine 604) is a Phosphoserine. An N6-acetyllysine; alternate modification is found at lysine 609. A Glycyl lysine isopeptide (Lys-Gly) (interchain with G-Cter in ubiquitin); alternate cross-link involves residue lysine 609. Serine 616 is subject to Phosphoserine. At lysine 622 the chain carries N6,N6-dimethyllysine; alternate. An N6-acetyllysine; alternate mark is found at lysine 622, lysine 628, and lysine 632. Residues lysine 622, lysine 628, and lysine 632 each participate in a glycyl lysine isopeptide (Lys-Gly) (interchain with G-Cter in ubiquitin); alternate cross-link. Serine 635 bears the Phosphoserine mark. N6-acetyllysine; alternate occurs at positions 642, 654, and 658. Glycyl lysine isopeptide (Lys-Gly) (interchain with G-Cter in ubiquitin); alternate cross-links involve residues lysine 642, lysine 654, and lysine 658. Position 660 is an omega-N-methylarginine (arginine 660). Serine 663 bears the Phosphoserine mark. Lysine 664 participates in a covalent cross-link: Glycyl lysine isopeptide (Lys-Gly) (interchain with G-Cter in ubiquitin). Position 667 is a phosphoserine (serine 667). The residue at position 680 (lysine 680) is an N6-acetyllysine; alternate. Lysine 680 participates in a covalent cross-link: Glycyl lysine isopeptide (Lys-Gly) (interchain with G-Cter in ubiquitin); alternate. A Glycyl lysine isopeptide (Lys-Gly) (interchain with G-Cter in ubiquitin) cross-link involves residue lysine 686. Lysine 696 is subject to N6-acetyllysine; alternate. Lysine 696 is covalently cross-linked (Glycyl lysine isopeptide (Lys-Gly) (interchain with G-Cter in ubiquitin); alternate). A Phosphotyrosine modification is found at tyrosine 705. Position 707 is a phosphoserine; by CK1 and PDPK1 (serine 707). Serine 711 bears the Phosphoserine mark. Phosphothreonine is present on threonine 714. Serine 715 bears the Phosphoserine; by CK1 and PDPK1 mark. Phosphoserine occurs at positions 720, 727, and 733. Position 738 is a phosphothreonine (threonine 738).

As to quaternary structure, interacts with MARK1, MARK2, MARK3 and MARK4. Interacts with SQSTM1 when polyubiquitinated. Interacts with PSMC2 through SQSTM1. Interacts with FKBP4. Binds to CSNK1D. Interacts with SGK1. Interacts with EPM2A; the interaction dephosphorylates MAPT at Ser-388. Interacts with PIN1. Interacts with LRRK2. Interacts with LRP1, leading to endocytosis; this interaction is reduced in the presence of LRPAP1/RAP. Polyubiquitinated. Requires functional TRAF6 and may provoke SQSTM1-dependent degradation by the proteasome. In terms of processing, phosphorylated at various serine and threonine residues in S-P or T-P motifs by proline-directed protein kinases (PDPK1, CDK1, CDK5, GSK3, MAPK) (a few sites per protein in interphase, more in mitosis), and at serine residues in K-X-G-S motifs by MAP/microtubule affinity-regulating kinase (MARK1, MARK2, MARK3, MARK4), causing detachment from microtubules, and their disassembly. Fetal Tau is much more phosphorylated than adult Tau. Phosphorylation at Ser-573 by BRSK1 and BRSK2 in neurons affects ability to bind microtubules and plays a role in neuron polarization. Phosphorylated by PHK. Dephosphorylation at several serine and threonine residues by the serine/threonine phosphatase PPP5C. Phosphorylation at Ser-204 by SGK1 mediates microtubule depolymerization and neurite formation in hippocampal neurons. In terms of tissue distribution, expressed in neurons. The larger forms (isoform tau-A and isoform tau-B) are preferentially expressed in the peripheral nervous system while the other are expressed in the central nervous system. Low amounts of the larger forms are also found in limited areas of the CNS.

The protein resides in the cytoplasm. It is found in the cytosol. The protein localises to the cell membrane. It localises to the cytoskeleton. Its subcellular location is the cell projection. The protein resides in the axon. It is found in the dendrite. The protein localises to the secreted. Promotes microtubule assembly and stability, and might be involved in the establishment and maintenance of neuronal polarity. The C-terminus binds axonal microtubules while the N-terminus binds neural plasma membrane components, suggesting that tau functions as a linker protein between both. Axonal polarity is predetermined by tau localization (in the neuronal cell) in the domain of the cell body defined by the centrosome. The short isoforms allow plasticity of the cytoskeleton whereas the longer isoforms may preferentially play a role in its stabilization. This is Microtubule-associated protein tau from Rattus norvegicus (Rat).